Here is a 354-residue protein sequence, read N- to C-terminus: Uroporphyrinogen decarboxylase (354 aa).

Substrate contacts are provided by residues 27 to 31, Asp77, Tyr154, Thr209, and His327; that span reads RQAGR.

Belongs to the uroporphyrinogen decarboxylase family. As to quaternary structure, homodimer.

It is found in the cytoplasm. The enzyme catalyses uroporphyrinogen III + 4 H(+) = coproporphyrinogen III + 4 CO2. It participates in porphyrin-containing compound metabolism; protoporphyrin-IX biosynthesis; coproporphyrinogen-III from 5-aminolevulinate: step 4/4. In terms of biological role, catalyzes the decarboxylation of four acetate groups of uroporphyrinogen-III to yield coproporphyrinogen-III. The chain is Uroporphyrinogen decarboxylase from Salmonella arizonae (strain ATCC BAA-731 / CDC346-86 / RSK2980).